We begin with the raw amino-acid sequence, 354 residues long: G protein alpha o subunit (354 aa).

Residue glycine 2 is the site of N-myristoyl glycine attachment. Cysteine 3 carries S-palmitoyl cysteine lipidation. The G-alpha domain occupies 32 to 354 (KDIKLLLLGA…ANNLRGCGLY (323 aa)). Residues 35–48 (KLLLLGAGESGKST) are G1 motif. GTP-binding positions include 40–47 (GAGESGKS), 176–182 (LRTRVKT), 201–205 (DVGGQ), 270–273 (NKKD), and alanine 326. 2 residues coordinate Mg(2+): serine 47 and threonine 182. The interval 174–182 (DILRTRVKT) is G2 motif. The segment at 197–206 (FKLFDVGGQR) is G3 motif. A G4 motif region spans residues 266-273 (ILFLNKKD). A G5 motif region spans residues 324-329 (TCATDT).

The protein belongs to the G-alpha family. G(i/o/t/z) subfamily. G proteins are composed of 3 units; alpha, beta and gamma. The alpha chain contains the guanine nucleotide binding site. Expressed primarily in neuronal cell bodies in the brain, optic lobe, and thoracic and abdominal ganglia. Also expressed in antenna, oocytes and ovarian nurse cells.

In terms of biological role, guanine nucleotide-binding proteins (G proteins) are involved as modulators or transducers in various transmembrane signaling systems. Plays a role in glial cell differentiation during embryogenesis; loco, Galphai and the G-protein coupled receptor, moody, are required in the surface glia to achieve effective insulation of the nerve cord. This chain is G protein alpha o subunit (Galphao), found in Drosophila melanogaster (Fruit fly).